Here is an 84-residue protein sequence, read N- to C-terminus: Cell division topological specificity factor (84 aa).

The protein belongs to the MinE family.

Functionally, prevents the cell division inhibition by proteins MinC and MinD at internal division sites while permitting inhibition at polar sites. This ensures cell division at the proper site by restricting the formation of a division septum at the midpoint of the long axis of the cell. The sequence is that of Cell division topological specificity factor from Paraburkholderia phymatum (strain DSM 17167 / CIP 108236 / LMG 21445 / STM815) (Burkholderia phymatum).